The primary structure comprises 133 residues: Small ribosomal subunit protein uS8 (133 aa).

This sequence belongs to the universal ribosomal protein uS8 family. Part of the 30S ribosomal subunit. Contacts proteins S5 and S12.

One of the primary rRNA binding proteins, it binds directly to 16S rRNA central domain where it helps coordinate assembly of the platform of the 30S subunit. In Synechococcus sp. (strain CC9605), this protein is Small ribosomal subunit protein uS8.